The following is a 1133-amino-acid chain: Lon protease homolog, mitochondrial (1133 aa).

Residues 1-37 (MLRTRTTKTLSTVARTTRAIQYYRSIAKTAAVSQRRF) constitute a mitochondrion transit peptide. Residues 38–98 (ASTLTVRDVE…ATNSGKSILA (61 aa)) constitute a propeptide, removed in mature form; by autocatalysis. Composition is skewed to basic and acidic residues over residues 98–117 (AKDD…VPDE) and 125–143 (EPTR…EASK). Disordered stretches follow at residues 98 to 176 (AKDD…KDVP) and 282 to 358 (ELFP…LDDI). The segment covering 145 to 166 (SRSSASGGGQSSSSRSDSGDGS) has biased composition (low complexity). The region spanning 182 to 480 (MLALPIARRP…KSLLVLKKEL (299 aa)) is the Lon N-terminal domain. Basic and acidic residues-rich tracts occupy residues 282-301 (ELFP…KDTD) and 325-340 (KLED…SELQ). A compositionally biased stretch (acidic residues) spans 348 to 358 (TEEESEELDDI). 632-639 (GPPGVGKT) is a binding site for ATP. Positions 839 to 892 (KKLSIEDSPTSSADSKPKESVSSEEKAENNAKSSSEKTKDNNSEKTSDDIEALK) are dispensable for catalytic activity. The segment at 844-889 (EDSPTSSADSKPKESVSSEEKAENNAKSSSEKTKDNNSEKTSDDIE) is disordered. The segment covering 853-889 (SKPKESVSSEEKAENNAKSSSEKTKDNNSEKTSDDIE) has biased composition (basic and acidic residues). One can recognise a Lon proteolytic domain in the interval 923–1109 (TTPPGVVMGL…NDIFQKLFKD (187 aa)). Residues Ser1015 and Lys1058 contribute to the active site.

The protein belongs to the peptidase S16 family. Homohexamer. Organized in a ring with a central cavity. The ATP-binding and proteolytic domains (AP-domain) form a hexameric chamber. Oligomerization is independent of its proteolytic activity and the autocatalytic maturation of its subunits.

It is found in the mitochondrion matrix. The catalysed reaction is Hydrolysis of proteins in presence of ATP.. Functionally, ATP-dependent serine protease that mediates the selective degradation of misfolded, unassembled or oxidatively damaged polypeptides as well as certain short-lived regulatory proteins in the mitochondrial matrix. May also have a chaperone function in the assembly of inner membrane protein complexes. Participates in the regulation of mitochondrial gene expression and in the maintenance of the integrity of the mitochondrial genome. Binds to mitochondrial DNA in a site-specific manner. Endogenous substrates include ABF2, ACO2, ILV1, ILV2, LSC1, LYS4, MGM101 and several oxidized proteins. The 2 nucleic acid-binding proteins ABF2 and MGM101 are protected from degradation by PIM1 when they are bound to DNA. The chain is Lon protease homolog, mitochondrial from Saccharomyces cerevisiae (strain ATCC 204508 / S288c) (Baker's yeast).